The chain runs to 247 residues: Caffeoyl-CoA O-methyltransferase 2 (247 aa).

Lysine 21 contributes to the substrate binding site. S-adenosyl-L-methionine-binding positions include threonine 63, glutamate 85, 87–88, serine 93, aspartate 111, and alanine 140; that span reads GV. Aspartate 163 contacts substrate. Aspartate 163 lines the a divalent metal cation pocket. Residue aspartate 165 coordinates S-adenosyl-L-methionine. The a divalent metal cation site is built by aspartate 189 and asparagine 190. Asparagine 194 provides a ligand contact to substrate.

The protein belongs to the class I-like SAM-binding methyltransferase superfamily. Cation-dependent O-methyltransferase family. CCoAMT subfamily. The cofactor is a divalent metal cation.

It carries out the reaction (E)-caffeoyl-CoA + S-adenosyl-L-methionine = (E)-feruloyl-CoA + S-adenosyl-L-homocysteine + H(+). It functions in the pathway aromatic compound metabolism; phenylpropanoid biosynthesis. Methylates caffeoyl-CoA to feruloyl-CoA and 5-hydroxyferuloyl-CoA to sinapoyl-CoA. Plays a role in the synthesis of feruloylated polysaccharides. Involved in the reinforcement of the plant cell wall. Also involved in the responding to wounding or pathogen challenge by the increased formation of cell wall-bound ferulic acid polymers. This Populus trichocarpa (Western balsam poplar) protein is Caffeoyl-CoA O-methyltransferase 2 (CCOAOMT2).